A 464-amino-acid polypeptide reads, in one-letter code: Soluble pyridine nucleotide transhydrogenase (464 aa).

35–44 (DNRPLVGGNC) is a binding site for FAD.

The protein belongs to the class-I pyridine nucleotide-disulfide oxidoreductase family. FAD is required as a cofactor.

It localises to the cytoplasm. It carries out the reaction NAD(+) + NADPH = NADH + NADP(+). In terms of biological role, conversion of NADPH, generated by peripheral catabolic pathways, to NADH, which can enter the respiratory chain for energy generation. This chain is Soluble pyridine nucleotide transhydrogenase, found in Stutzerimonas stutzeri (strain A1501) (Pseudomonas stutzeri).